The following is a 299-amino-acid chain: Circadian clock oscillator protein KaiA (299 aa).

The region spanning 1-169 (MVSKLSLYLV…RLAEKLRERL (169 aa)) is the KaiA N-terminal domain. Residues 3-135 (SKLSLYLVTP…LHLAPSCALS (133 aa)) form a psR domain, binds oxidized quinones region. Positions 170–178 (GYLGVYYKR) are flexible linker. One can recognise a KaiA C-terminal domain in the interval 179–287 (NPKYFYRSLS…CEMYRRSIPR (109 aa)).

As to quaternary structure, homodimer. The KaiABC complex composition changes during the circadian cycle to control KaiC phosphorylation. Complexes KaiC(6), KaiA(2-4):KaiC(6), KaiB(6):KaiC(6) and KaiC(6):KaiB(6):KaiA(12) are among the most important forms, many form cooperatively. KaiA and CikA bind to the same region of the KaiB(fs) form and therefore compete.

Its function is as follows. Key component of the KaiABC oscillator complex, which constitutes the main circadian regulator in cyanobacteria. Complex composition changes during the circadian cycle to control KaiC phosphorylation. KaiA stimulates KaiC autophosphorylation, while KaiB sequesters KaiA, leading to KaiC autodephosphorylation. KaiA binding to the KaiC CII domain during the subjective day yields KaiA(2-4):KaiC(6) complexes which stimulate KaiC autophosphorylation. Phospho-Ser-431 KaiC accumulation triggers binding of KaiB during the subjective night to form the KaiB(6):KaiC(6) complex, leading to changes in the output regulators CikA and SasA. KaiB(6):KaiC(6) formation exposes a site for KaiA binding on KaiB that sequesters KaiA from KaiC's CII domain, making the KaiC(6):KaiB(6):KaiA(12) complex resulting in KaiC autodephosphorylation. Complete dephosphorylation of KaiC leads to dissociation of KaiA(2):KaiB(1), completing 1 cycle of the Kai oscillator. Binds oxidized quinones via the N-terminal PsR domain, allowing it to sense redox changes and possibly mediate clock input. The polypeptide is Circadian clock oscillator protein KaiA (Picosynechococcus sp. (strain ATCC 27264 / PCC 7002 / PR-6) (Agmenellum quadruplicatum)).